The chain runs to 650 residues: Hemocyanin subunit 2 (650 aa).

Serine 120 and serine 172 each carry an O-linked (GalNAc...) serine glycan. Residues histidine 193, histidine 197, and histidine 225 each contribute to the Cu cation site. Asparagine 309 carries an N-linked (GlcNAc...) asparagine glycan. 3 residues coordinate Cu cation: histidine 344, histidine 348, and histidine 384.

Belongs to the tyrosinase family. Hemocyanin subfamily. In terms of assembly, hexamer of a number of different chains, of which five have been identified. In terms of processing, contains one N-glycosylated and three O-glycosylated residues. The position of one of the O-glycosylated residues has not been determined. Post-translationally, O-linked glycan at Ser-120 may be composed of two GalNAc, three Gal, and two N-acetylneuraminic acid units for a total 1525-Da MW. As to expression, hemolymph.

Its subcellular location is the secreted. The protein localises to the extracellular space. Its function is as follows. Hemocyanins are copper-containing oxygen carriers occurring freely dissolved in the hemolymph of many mollusks and arthropods. In Carcinus aestuarii (Green crab), this protein is Hemocyanin subunit 2.